The primary structure comprises 475 residues: Ribulose bisphosphate carboxylase large chain (475 aa).

A propeptide spanning residues 1 to 2 (MS) is cleaved from the precursor. Proline 3 is subject to N-acetylproline. Substrate-binding residues include asparagine 123 and threonine 173. The Proton acceptor role is filled by lysine 175. Lysine 177 contributes to the substrate binding site. Mg(2+) is bound by residues lysine 201, aspartate 203, and glutamate 204. Lysine 201 bears the N6-carboxylysine mark. The active-site Proton acceptor is histidine 294. Residues arginine 295, histidine 327, and serine 379 each contribute to the substrate site.

Belongs to the RuBisCO large chain family. Type I subfamily. In terms of assembly, heterohexadecamer of 8 large chains and 8 small chains; disulfide-linked. The disulfide link is formed within the large subunit homodimers. Requires Mg(2+) as cofactor. In terms of processing, the disulfide bond which can form in the large chain dimeric partners within the hexadecamer appears to be associated with oxidative stress and protein turnover.

It localises to the plastid. The protein localises to the chloroplast. The enzyme catalyses 2 (2R)-3-phosphoglycerate + 2 H(+) = D-ribulose 1,5-bisphosphate + CO2 + H2O. The catalysed reaction is D-ribulose 1,5-bisphosphate + O2 = 2-phosphoglycolate + (2R)-3-phosphoglycerate + 2 H(+). Its function is as follows. RuBisCO catalyzes two reactions: the carboxylation of D-ribulose 1,5-bisphosphate, the primary event in carbon dioxide fixation, as well as the oxidative fragmentation of the pentose substrate in the photorespiration process. Both reactions occur simultaneously and in competition at the same active site. The chain is Ribulose bisphosphate carboxylase large chain from Gnetum parvifolium (Small-leaved jointfir).